Here is a 1342-residue protein sequence, read N- to C-terminus: WD repeat-containing protein 19 (1342 aa).

WD repeat units lie at residues 11–51 (TWLG…RSEI), 52–92 (NLPG…TSQL), 95–134 (GMRD…KIPV), 137–175 (KHTK…IRQT), 273–311 (NHKD…DMYV), and 317–356 (EENK…LGDA). 6 TPR repeats span residues 736-769 (AQDL…AKHL), 775-808 (PFIS…DNKE), 840-873 (RVLK…DKAA), 895-928 (PKIH…QSVI), 951-984 (LDGA…NEAF), and 1020-1053 (EKRY…EDNV).

In terms of assembly, component of the IFT complex A (IFT-A) complex. IFT-A complex is divided into a core subcomplex composed of IFT122:IFT140:WDR19 which is associated with TULP3 and a peripheral subcomplex composed of IFT43:WDR35:TTC21B. Interacts (via C-terminal region) with IFT122 (via C-terminal region). Interacts with BBS1. Interacts with TTC25. Some isoforms are tissue-specific. Highly expressed in the prostate. Lower expression in the cerebellum, pituitary gland, fetal lung, and pancreas. In normal prostate, expressed in both basal and luminal epithelial cells. No expression detected in fibromuscular stromal cells, endothelial cells, or infiltrating lymphocytes. Uniformed expression in prostate adenocarcinoma cells.

The protein localises to the cell projection. The protein resides in the cilium. Its subcellular location is the cytoplasm. It localises to the cytoskeleton. It is found in the cilium basal body. The protein localises to the photoreceptor outer segment. The protein resides in the flagellum. As component of the IFT complex A (IFT-A), a complex required for retrograde ciliary transport and entry into cilia of G protein-coupled receptors (GPCRs), it is involved in cilia function and/or assembly. Essential for functional IFT-A assembly and ciliary entry of GPCRs. Associates with the BBSome complex to mediate ciliary transport. The chain is WD repeat-containing protein 19 from Homo sapiens (Human).